The following is a 264-amino-acid chain: Osteopontin (264 aa).

The first 16 residues, 1–16 (MKLAFLCLCFISIAAA), serve as a signal peptide directing secretion. Disordered regions lie at residues 21–141 (KSRQ…RGDS) and 166–264 (IEDD…EVTR). The span at 31 to 51 (SEEKYDPRSHHTHRYHQDHVD) shows a compositional bias: basic and acidic residues. Over residues 52–73 (SQSQEHLQQTQNDLASLQQTHY) the composition is skewed to polar residues. The segment covering 97 to 118 (AVDDDDDDDNDSNDTDESDEVV) has biased composition (acidic residues). N-linked (GlcNAc...) asparagine glycans are attached at residues asparagine 106 and asparagine 109. The Cell attachment site signature appears at 132 to 134 (RGD). A compositionally biased stretch (basic and acidic residues) spans 186–212 (KESREQDSRELAQHQSVENDSRPRFDS). Asparagine 204 and asparagine 242 each carry an N-linked (GlcNAc...) asparagine glycan. Positions 233-246 (ASRSAVDTSNQTLE) are enriched in polar residues. Over residues 252–264 (EDRHSIENNEVTR) the composition is skewed to basic and acidic residues.

This sequence belongs to the osteopontin family. In terms of processing, extensively phosphorylated on serine residues.

It localises to the secreted. Its function is as follows. Major non-collagenous bone protein that binds tightly to hydroxyapatite. Appears to form an integral part of the mineralized matrix. Probably important to cell-matrix interaction. Acts as a cytokine involved in enhancing production of interferon-gamma and interleukin-12 and reducing production of interleukin-10 and is essential in the pathway that leads to type I immunity. This chain is Osteopontin (SPP1), found in Gallus gallus (Chicken).